A 241-amino-acid chain; its full sequence is Zinc finger CCHC domain-containing protein 24 (241 aa).

Phosphoserine is present on residues S65 and S93. The segment at Y132–Q149 adopts a CCHC-type zinc-finger fold.

The polypeptide is Zinc finger CCHC domain-containing protein 24 (Mus musculus (Mouse)).